The chain runs to 329 residues: Malate dehydrogenase (329 aa).

12-18 (GAAGQIG) lines the NAD(+) pocket. Substrate contacts are provided by Arg-95 and Arg-101. Residues Asn-108, Gln-115, and 132-134 (VGN) contribute to the NAD(+) site. 2 residues coordinate substrate: Asn-134 and Arg-165. His-190 acts as the Proton acceptor in catalysis.

This sequence belongs to the LDH/MDH superfamily. MDH type 2 family.

The catalysed reaction is (S)-malate + NAD(+) = oxaloacetate + NADH + H(+). Functionally, catalyzes the reversible oxidation of malate to oxaloacetate. This is Malate dehydrogenase from Bordetella bronchiseptica (strain ATCC BAA-588 / NCTC 13252 / RB50) (Alcaligenes bronchisepticus).